We begin with the raw amino-acid sequence, 431 residues long: Mannan endo-1,4-beta-mannosidase 7 (431 aa).

A signal peptide spans 1 to 25; sequence MKLLALFPFLAIVIQLSCWELGTDA. Substrate contacts are provided by W87 and N202. The Proton donor role is filled by E203. Residue Y280 coordinates substrate. The Nucleophile role is filled by E320. W362 serves as a coordination point for substrate.

The protein belongs to the glycosyl hydrolase 5 (cellulase A) family. As to expression, expressed in stems, flowers, siliques and seeds. Expressed in root vasculature, leaf hydathodes, anther filaments, stigma, sepal vasculature, at the base and apical parts of siliques, and replum. Expressed in the micropylar endosperm and radicle tip in early germinating seeds.

The protein resides in the secreted. The enzyme catalyses Random hydrolysis of (1-&gt;4)-beta-D-mannosidic linkages in mannans, galactomannans and glucomannans.. Required for both, loosening of the micropylar endosperm, and rupture of the seed coat in germinating seeds. May participate in the hydrolysis of the mannans in the cell wall of germinating seeds. In Arabidopsis thaliana (Mouse-ear cress), this protein is Mannan endo-1,4-beta-mannosidase 7 (MAN7).